Here is a 325-residue protein sequence, read N- to C-terminus: DNA repair and recombination protein RadA (325 aa).

107–114 provides a ligand contact to ATP; the sequence is GEFGSGKT.

The protein belongs to the eukaryotic RecA-like protein family.

Functionally, involved in DNA repair and in homologous recombination. Binds and assemble on single-stranded DNA to form a nucleoprotein filament. Hydrolyzes ATP in a ssDNA-dependent manner and promotes DNA strand exchange between homologous DNA molecules. This Methanococcoides burtonii (strain DSM 6242 / NBRC 107633 / OCM 468 / ACE-M) protein is DNA repair and recombination protein RadA.